The sequence spans 324 residues: Autolytic lysozyme (324 aa).

Active-site residues include D5 and E91. 5 consecutive repeat copies span residues 212–234, 235–254, 255–277, 278–300, and 301–324. The interval 212–324 is 5 X 23 AA tandem repeats; the sequence is LLKRGLEVDG…ATWSKLLDEN (113 aa).

Belongs to the glycosyl hydrolase 25 family. As to quaternary structure, monomer.

It is found in the secreted. Its subcellular location is the cytoplasm. It catalyses the reaction Hydrolysis of (1-&gt;4)-beta-linkages between N-acetylmuramic acid and N-acetyl-D-glucosamine residues in a peptidoglycan and between N-acetyl-D-glucosamine residues in chitodextrins.. The protein is Autolytic lysozyme (lyc) of Clostridium acetobutylicum (strain ATCC 824 / DSM 792 / JCM 1419 / IAM 19013 / LMG 5710 / NBRC 13948 / NRRL B-527 / VKM B-1787 / 2291 / W).